We begin with the raw amino-acid sequence, 500 residues long: Aspartyl/glutamyl-tRNA(Asn/Gln) amidotransferase subunit B (500 aa).

The protein belongs to the GatB/GatE family. GatB subfamily. As to quaternary structure, heterotrimer of A, B and C subunits.

It catalyses the reaction L-glutamyl-tRNA(Gln) + L-glutamine + ATP + H2O = L-glutaminyl-tRNA(Gln) + L-glutamate + ADP + phosphate + H(+). The enzyme catalyses L-aspartyl-tRNA(Asn) + L-glutamine + ATP + H2O = L-asparaginyl-tRNA(Asn) + L-glutamate + ADP + phosphate + 2 H(+). Its function is as follows. Allows the formation of correctly charged Asn-tRNA(Asn) or Gln-tRNA(Gln) through the transamidation of misacylated Asp-tRNA(Asn) or Glu-tRNA(Gln) in organisms which lack either or both of asparaginyl-tRNA or glutaminyl-tRNA synthetases. The reaction takes place in the presence of glutamine and ATP through an activated phospho-Asp-tRNA(Asn) or phospho-Glu-tRNA(Gln). The protein is Aspartyl/glutamyl-tRNA(Asn/Gln) amidotransferase subunit B of Clavibacter sepedonicus (Clavibacter michiganensis subsp. sepedonicus).